Reading from the N-terminus, the 199-residue chain is Peroxiredoxin-1 (199 aa).

Ser2 is subject to N-acetylserine. The Thioredoxin domain occupies 6 to 165 (AKIGYPAPNF…ILRLVQAFQF (160 aa)). Residue Lys7 is modified to N6-acetyllysine; alternate. Residue Lys7 forms a Glycyl lysine isopeptide (Lys-Gly) (interchain with G-Cter in SUMO2); alternate linkage. Lys16 carries the N6-acetyllysine modification. Ser32 bears the Phosphoserine mark. Residue Cys52 is the Cysteine sulfenic acid (-SOH) intermediate of the active site. Thr90 bears the Phosphothreonine mark. Lys120 is covalently cross-linked (Glycyl lysine isopeptide (Lys-Gly) (interchain with G-Cter in SUMO2)). An N6-acetyllysine modification is found at Lys136. The interval 176 to 199 (GWKPGSDTIKPDVQKSKEYFSKQK) is disordered. Residues 184 to 199 (IKPDVQKSKEYFSKQK) are compositionally biased toward basic and acidic residues. Lys185 is covalently cross-linked (Glycyl lysine isopeptide (Lys-Gly) (interchain with G-Cter in SUMO1)). Lys197 is modified (N6-acetyllysine).

Belongs to the peroxiredoxin family. AhpC/Prx1 subfamily. Homodimer; disulfide-linked, upon oxidation. 5 homodimers assemble to form a ring-like decamer. Interacts with GDPD5; forms a mixed-disulfide with GDPD5. Interacts with SESN1 and SESN2. Interacts with FAM107A. Phosphorylated on Thr-90 during the M-phase, which leads to a decrease in enzymatic activity. Post-translationally, acetylation increases reducing activity and resistance to superoxidation. Deacetylated by HDAC6 which decreases reducing activity.

It is found in the cytoplasm. The catalysed reaction is a hydroperoxide + [thioredoxin]-dithiol = an alcohol + [thioredoxin]-disulfide + H2O. Its function is as follows. Thiol-specific peroxidase that catalyzes the reduction of hydrogen peroxide and organic hydroperoxides to water and alcohols, respectively. Plays a role in cell protection against oxidative stress by detoxifying peroxides and as sensor of hydrogen peroxide-mediated signaling events. Might participate in the signaling cascades of growth factors and tumor necrosis factor-alpha by regulating the intracellular concentrations of H(2)O(2). Reduces an intramolecular disulfide bond in GDPD5 that gates the ability to GDPD5 to drive postmitotic motor neuron differentiation. The chain is Peroxiredoxin-1 (PRDX1) from Cricetulus griseus (Chinese hamster).